The primary structure comprises 163 residues: Allophycocyanin alpha-B chain (163 aa).

The residue at position 71 (Asn-71) is an N4-methylasparagine. Cys-81 serves as a coordination point for (2R,3E)-phycocyanobilin.

Belongs to the phycobiliprotein family. In terms of processing, contains one covalently linked bilin chromophore.

It is found in the plastid. It localises to the chloroplast thylakoid membrane. Its function is as follows. Allophycocyanin is a photosynthetic bile pigment-protein complex with maximum absorption at approximately 650 nanometers. The polypeptide is Allophycocyanin alpha-B chain (apcD) (Cyanidium caldarium (Red alga)).